The sequence spans 312 residues: Ribosomal protein L11 methyltransferase (312 aa).

S-adenosyl-L-methionine is bound by residues Thr-160, Gly-181, Asp-203, and Asn-246.

Belongs to the methyltransferase superfamily. PrmA family.

It is found in the cytoplasm. The enzyme catalyses L-lysyl-[protein] + 3 S-adenosyl-L-methionine = N(6),N(6),N(6)-trimethyl-L-lysyl-[protein] + 3 S-adenosyl-L-homocysteine + 3 H(+). Functionally, methylates ribosomal protein L11. This Staphylococcus saprophyticus subsp. saprophyticus (strain ATCC 15305 / DSM 20229 / NCIMB 8711 / NCTC 7292 / S-41) protein is Ribosomal protein L11 methyltransferase.